The primary structure comprises 289 residues: MGVGMQDIKRRIKSVNSTKQITKAMELVSSAKLRKARLKLEKTRPYFKVVEETINDIVSSTQGIRHDLITPREVKKTAYIVITADRGLSGGYNANVIKAAVNHLQEKERVSIIAIGKKGRGFFRKRGYDLDGEFTKISENPSFSDAQGIGKLGMELYKQELVDELYLVYTEFVSTITHKPRVVKLLPLEPQTGGEGAEKPKERDEFMSYEPSPEEVLDYLIPKYIESMLYGALVESSTSQQGATRVAMESATDNATDMIDGLQLQYNRARQASITQEIAEIVSGAEALK.

The protein belongs to the ATPase gamma chain family. In terms of assembly, F-type ATPases have 2 components, CF(1) - the catalytic core - and CF(0) - the membrane proton channel. CF(1) has five subunits: alpha(3), beta(3), gamma(1), delta(1), epsilon(1). CF(0) has three main subunits: a, b and c.

Its subcellular location is the cell membrane. Its function is as follows. Produces ATP from ADP in the presence of a proton gradient across the membrane. The gamma chain is believed to be important in regulating ATPase activity and the flow of protons through the CF(0) complex. In Alkaliphilus metalliredigens (strain QYMF), this protein is ATP synthase gamma chain.